The following is a 185-amino-acid chain: MKMIVGLGNIEKKYEGTRHNVGFMVVERFVEEHGGNFNKEKFDSLISELFINGEKIIVIKPTTYMNESGRAVRPLMDYFNLTTEDIIICHDDMDLEIGHLRLRQKGSAGGHNGIKSIISHVGTEKFKRVRVGIDHPQKMSVVDWVLSRFTKEQEAKLDDGLTRAVAALDDWIENDDFMNTMNRFN.

Tyrosine 14 provides a ligand contact to tRNA. The Proton acceptor role is filled by histidine 19. Residues tyrosine 64, asparagine 66, and asparagine 112 each contribute to the tRNA site.

Belongs to the PTH family. In terms of assembly, monomer.

The protein localises to the cytoplasm. It catalyses the reaction an N-acyl-L-alpha-aminoacyl-tRNA + H2O = an N-acyl-L-amino acid + a tRNA + H(+). Hydrolyzes ribosome-free peptidyl-tRNAs (with 1 or more amino acids incorporated), which drop off the ribosome during protein synthesis, or as a result of ribosome stalling. In terms of biological role, catalyzes the release of premature peptidyl moieties from peptidyl-tRNA molecules trapped in stalled 50S ribosomal subunits, and thus maintains levels of free tRNAs and 50S ribosomes. In Ligilactobacillus salivarius (strain UCC118) (Lactobacillus salivarius), this protein is Peptidyl-tRNA hydrolase.